We begin with the raw amino-acid sequence, 160 residues long: Large ribosomal subunit protein bL17 (160 aa).

Residues 128-160 (KKATKTRRSRKRKSADVVVEAAPAEETPKAAEE) are disordered. A compositionally biased stretch (basic residues) spans 129 to 140 (KATKTRRSRKRK).

This sequence belongs to the bacterial ribosomal protein bL17 family. As to quaternary structure, part of the 50S ribosomal subunit. Contacts protein L32.

This is Large ribosomal subunit protein bL17 from Porphyromonas gingivalis (strain ATCC 33277 / DSM 20709 / CIP 103683 / JCM 12257 / NCTC 11834 / 2561).